Here is a 280-residue protein sequence, read N- to C-terminus: Protoheme IX farnesyltransferase 2 (280 aa).

Helical transmembrane passes span 12-32 (VIWL…GGVD), 35-55 (LFSL…FNHY), 76-96 (LITP…GISL), 98-118 (FLLL…FYAV), 129-149 (WLNI…GYAL), 158-178 (AVLI…ALAF), 199-221 (ERAV…WLYL), 226-248 (GAGG…YAAV), and 255-275 (MWKM…ALMI).

It belongs to the UbiA prenyltransferase family. Protoheme IX farnesyltransferase subfamily.

The protein localises to the cell membrane. It carries out the reaction heme b + (2E,6E)-farnesyl diphosphate + H2O = Fe(II)-heme o + diphosphate. The protein operates within porphyrin-containing compound metabolism; heme O biosynthesis; heme O from protoheme: step 1/1. Functionally, converts heme B (protoheme IX) to heme O by substitution of the vinyl group on carbon 2 of heme B porphyrin ring with a hydroxyethyl farnesyl side group. The protein is Protoheme IX farnesyltransferase 2 of Pyrobaculum aerophilum (strain ATCC 51768 / DSM 7523 / JCM 9630 / CIP 104966 / NBRC 100827 / IM2).